The sequence spans 102 residues: UPF0147 protein MTH_1407 (102 aa).

The protein belongs to the UPF0147 family.

The sequence is that of UPF0147 protein MTH_1407 from Methanothermobacter thermautotrophicus (strain ATCC 29096 / DSM 1053 / JCM 10044 / NBRC 100330 / Delta H) (Methanobacterium thermoautotrophicum).